We begin with the raw amino-acid sequence, 1899 residues long: Protein TIC 214 (1899 aa).

6 helical membrane passes run 23–43, 64–84, 87–107, 124–144, 172–192, and 217–237; these read VVVG…SYLF, FITG…HLAL, PHTI…WNNH, LSIQ…LFIL, VGWL…LVCI, and WTAR…LGVH. Disordered stretches follow at residues 256–280 and 1581–1619; these read EQKK…TKKE and PKDY…GLDL. Basic and acidic residues predominate over residues 269–280; that stretch reads EKTFETKETKKE.

This sequence belongs to the TIC214 family. Part of the Tic complex.

The protein resides in the plastid. It is found in the chloroplast inner membrane. Functionally, involved in protein precursor import into chloroplasts. May be part of an intermediate translocation complex acting as a protein-conducting channel at the inner envelope. The chain is Protein TIC 214 from Ceratophyllum demersum (Rigid hornwort).